The sequence spans 222 residues: Phosphoribosylformylglycinamidine synthase subunit PurQ (222 aa).

The region spanning 3-222 (AAVVVFPGSN…RALSGLLTDA (220 aa)) is the Glutamine amidotransferase type-1 domain. Cysteine 86 functions as the Nucleophile in the catalytic mechanism. Active-site residues include histidine 194 and glutamate 196.

In terms of assembly, part of the FGAM synthase complex composed of 1 PurL, 1 PurQ and 2 PurS subunits.

It is found in the cytoplasm. It catalyses the reaction N(2)-formyl-N(1)-(5-phospho-beta-D-ribosyl)glycinamide + L-glutamine + ATP + H2O = 2-formamido-N(1)-(5-O-phospho-beta-D-ribosyl)acetamidine + L-glutamate + ADP + phosphate + H(+). It carries out the reaction L-glutamine + H2O = L-glutamate + NH4(+). It functions in the pathway purine metabolism; IMP biosynthesis via de novo pathway; 5-amino-1-(5-phospho-D-ribosyl)imidazole from N(2)-formyl-N(1)-(5-phospho-D-ribosyl)glycinamide: step 1/2. Its function is as follows. Part of the phosphoribosylformylglycinamidine synthase complex involved in the purines biosynthetic pathway. Catalyzes the ATP-dependent conversion of formylglycinamide ribonucleotide (FGAR) and glutamine to yield formylglycinamidine ribonucleotide (FGAM) and glutamate. The FGAM synthase complex is composed of three subunits. PurQ produces an ammonia molecule by converting glutamine to glutamate. PurL transfers the ammonia molecule to FGAR to form FGAM in an ATP-dependent manner. PurS interacts with PurQ and PurL and is thought to assist in the transfer of the ammonia molecule from PurQ to PurL. The chain is Phosphoribosylformylglycinamidine synthase subunit PurQ from Ruegeria sp. (strain TM1040) (Silicibacter sp.).